Here is a 624-residue protein sequence, read N- to C-terminus: Mannosyl-oligosaccharide 1,2-alpha-mannosidase MNS3 (624 aa).

Residues 1–43 (MSKSLPYSVKDIHYDNAKFRHRSPLKVFSQSLLTLSTKRNYAS) are Cytoplasmic-facing. Residues 44–64 (CSTGKFLILILFFGVACLMLM) form a helical; Signal-anchor for type II membrane protein membrane-spanning segment. Topologically, residues 65 to 624 (SKSPNESGLN…AHPLPIRRNT (560 aa)) are lumenal. Residues Asn-69 and Asn-114 are each glycosylated (N-linked (GlcNAc...) asparagine). The interval 91-123 (LRKPPRLPPRLSPDEGQLRGSSTNGSTISNSDP) is disordered. Low complexity predominate over residues 110–121 (GSSTNGSTISNS). Glu-212 acts as the Proton donor in catalysis. A glycan (N-linked (GlcNAc...) asparagine) is linked at Asn-236. The active site involves Asp-357. Asn-377 is a glycosylation site (N-linked (GlcNAc...) asparagine). Cys-428 and Cys-471 are joined by a disulfide. The active-site Proton donor is the Glu-485. N-linked (GlcNAc...) asparagine glycosylation is present at Asn-503. The active site involves Glu-526. Residue Thr-613 coordinates Ca(2+).

This sequence belongs to the glycosyl hydrolase 47 family. Requires Ca(2+) as cofactor. The cofactor is Mn(2+). It depends on Mg(2+) as a cofactor. Expressed in flowers, siliques, stems, leaves, roots, stamens and sepals.

It is found in the golgi apparatus. It localises to the cis-Golgi network membrane. It carries out the reaction N(4)-(alpha-D-Man-(1-&gt;2)-alpha-D-Man-(1-&gt;2)-alpha-D-Man-(1-&gt;3)-[alpha-D-Man-(1-&gt;2)-alpha-D-Man-(1-&gt;3)-[alpha-D-Man-(1-&gt;2)-alpha-D-Man-(1-&gt;6)]-alpha-D-Man-(1-&gt;6)]-beta-D-Man-(1-&gt;4)-beta-D-GlcNAc-(1-&gt;4)-beta-D-GlcNAc)-L-asparaginyl-[protein] (N-glucan mannose isomer 9A1,2,3B1,2,3) + 4 H2O = N(4)-(alpha-D-Man-(1-&gt;3)-[alpha-D-Man-(1-&gt;3)-[alpha-D-Man-(1-&gt;6)]-alpha-D-Man-(1-&gt;6)]-beta-D-Man-(1-&gt;4)-beta-D-GlcNAc-(1-&gt;4)-beta-D-GlcNAc)-L-asparaginyl-[protein] (N-glucan mannose isomer 5A1,2) + 4 beta-D-mannose. It catalyses the reaction N(4)-(alpha-D-Man-(1-&gt;2)-alpha-D-Man-(1-&gt;2)-alpha-D-Man-(1-&gt;3)-[alpha-D-Man-(1-&gt;3)-[alpha-D-Man-(1-&gt;2)-alpha-D-Man-(1-&gt;6)]-alpha-D-Man-(1-&gt;6)]-beta-D-Man-(1-&gt;4)-beta-D-GlcNAc-(1-&gt;4)-beta-D-GlcNAc)-L-asparaginyl-[protein] (N-glucan mannose isomer 8A1,2,3B1,3) + 3 H2O = N(4)-(alpha-D-Man-(1-&gt;3)-[alpha-D-Man-(1-&gt;3)-[alpha-D-Man-(1-&gt;6)]-alpha-D-Man-(1-&gt;6)]-beta-D-Man-(1-&gt;4)-beta-D-GlcNAc-(1-&gt;4)-beta-D-GlcNAc)-L-asparaginyl-[protein] (N-glucan mannose isomer 5A1,2) + 3 beta-D-mannose. The catalysed reaction is N(4)-(alpha-D-Man-(1-&gt;2)-alpha-D-Man-(1-&gt;2)-alpha-D-Man-(1-&gt;3)-[alpha-D-Man-(1-&gt;2)-alpha-D-Man-(1-&gt;3)-[alpha-D-Man-(1-&gt;2)-alpha-D-Man-(1-&gt;6)]-alpha-D-Man-(1-&gt;6)]-beta-D-Man-(1-&gt;4)-beta-D-GlcNAc-(1-&gt;4)-beta-D-GlcNAc)-L-asparaginyl-[protein] (N-glucan mannose isomer 9A1,2,3B1,2,3) + H2O = N(4)-(alpha-D-Man-(1-&gt;2)-alpha-D-Man-(1-&gt;2)-alpha-D-Man-(1-&gt;3)-[alpha-D-Man-(1-&gt;3)-[alpha-D-Man-(1-&gt;2)-alpha-D-Man-(1-&gt;6)]-alpha-D-Man-(1-&gt;6)]-beta-D-Man-(1-&gt;4)-beta-D-GlcNAc-(1-&gt;4)-beta-D-GlcNAc)-L-asparaginyl-[protein] (N-glucan mannose isomer 8A1,2,3B1,3) + beta-D-mannose. It functions in the pathway protein modification; protein glycosylation. With respect to regulation, inhibited by kifunensine and 1-deoxymannojirimycin, but not by swainsonine. Its function is as follows. Class I alpha-mannosidase essential for early N-glycan processing. Removes preferentially alpha-1,2-linked mannose residues from Man(9)GlcNAc(2) to produce Man(8)GlcNAc(2). Involved in root development and cell wall biosynthesis. This is Mannosyl-oligosaccharide 1,2-alpha-mannosidase MNS3 (MNS3) from Arabidopsis thaliana (Mouse-ear cress).